Consider the following 469-residue polypeptide: 6-phospho-beta-galactosidase (469 aa).

Glutamine 18, histidine 115, asparagine 158, glutamate 159, and asparagine 296 together coordinate D-galactose 6-phosphate. Glutamate 159 serves as the catalytic Proton donor. Glutamate 374 functions as the Nucleophile in the catalytic mechanism. D-galactose 6-phosphate-binding residues include serine 429, tryptophan 430, lysine 436, and tyrosine 438.

It belongs to the glycosyl hydrolase 1 family.

The catalysed reaction is a 6-phospho-beta-D-galactoside + H2O = D-galactose 6-phosphate + an alcohol. Its pathway is carbohydrate metabolism; lactose degradation; D-galactose 6-phosphate and beta-D-glucose from lactose 6-phosphate: step 1/1. In Staphylococcus haemolyticus (strain JCSC1435), this protein is 6-phospho-beta-galactosidase.